The primary structure comprises 68 residues: UPF0434 protein H16_A0605 (68 aa).

Belongs to the UPF0434 family.

In Cupriavidus necator (strain ATCC 17699 / DSM 428 / KCTC 22496 / NCIMB 10442 / H16 / Stanier 337) (Ralstonia eutropha), this protein is UPF0434 protein H16_A0605.